Consider the following 734-residue polypeptide: Photosystem I P700 chlorophyll a apoprotein A2 (734 aa).

The next 8 membrane-spanning stretches (helical) occupy residues 46-69 (IFAS…FHVA), 135-158 (LYTG…LHLQ), 175-199 (LNHH…HVAI), 273-291 (MAHH…GHMY), 330-353 (IHFQ…QHMY), 369-395 (AALY…IFFI), 417-439 (AIKS…LYVH), and 517-535 (FLVH…LILV). [4Fe-4S] cluster is bound by residues cysteine 559 and cysteine 568. A run of 2 helical transmembrane segments spans residues 575 to 596 (AFYL…YWHW) and 643 to 665 (LSVW…MFLI). Positions 654, 662, and 670 each coordinate chlorophyll a. Residue tryptophan 671 coordinates phylloquinone. Residues 707–727 (LVGLAHFSVGYIFTYAAFLIA) form a helical membrane-spanning segment.

This sequence belongs to the PsaA/PsaB family. In terms of assembly, the PsaA/B heterodimer binds the P700 chlorophyll special pair and subsequent electron acceptors. PSI consists of a core antenna complex that captures photons, and an electron transfer chain that converts photonic excitation into a charge separation. The eukaryotic PSI reaction center is composed of at least 11 subunits. The cofactor is P700 is a chlorophyll a/chlorophyll a' dimer, A0 is one or more chlorophyll a, A1 is one or both phylloquinones and FX is a shared 4Fe-4S iron-sulfur center..

It is found in the plastid. Its subcellular location is the chloroplast thylakoid membrane. The catalysed reaction is reduced [plastocyanin] + hnu + oxidized [2Fe-2S]-[ferredoxin] = oxidized [plastocyanin] + reduced [2Fe-2S]-[ferredoxin]. Functionally, psaA and PsaB bind P700, the primary electron donor of photosystem I (PSI), as well as the electron acceptors A0, A1 and FX. PSI is a plastocyanin-ferredoxin oxidoreductase, converting photonic excitation into a charge separation, which transfers an electron from the donor P700 chlorophyll pair to the spectroscopically characterized acceptors A0, A1, FX, FA and FB in turn. Oxidized P700 is reduced on the lumenal side of the thylakoid membrane by plastocyanin. The chain is Photosystem I P700 chlorophyll a apoprotein A2 from Chloranthus spicatus (Chulantree).